The chain runs to 210 residues: MASLLIIVFLSHVVTYLINTIGATTVDNLLWLLYLKLPNNTSRTAVEQRRLKGEVVQLKREMKSTSSQDEFAKWAKLRRRHDKAMEEYEAKNKALGKHKGSFDLTVKSVRFFSTTGLKFFLQFWYSKTPMFELPRGWVPWQVEWVLSFPRAPLGTVSIQVWSGVCTTVVSLAGDALGVVIQSLILKMTKRGVARTSEGRPSQPMALKKEL.

Over 1-4 (MASL) the chain is Lumenal. The chain crosses the membrane as a helical span at residues 5-24 (LIIVFLSHVVTYLINTIGAT). At 25–110 (TVDNLLWLLY…SFDLTVKSVR (86 aa)) the chain is on the cytoplasmic side. Residues 43-97 (RTAVEQRRLKGEVVQLKREMKSTSSQDEFAKWAKLRRRHDKAMEEYEAKNKALGK) are a coiled coil. A helical transmembrane segment spans residues 111–131 (FFSTTGLKFFLQFWYSKTPMF). Topologically, residues 132 to 155 (ELPRGWVPWQVEWVLSFPRAPLGT) are lumenal. The helical transmembrane segment at 156-172 (VSIQVWSGVCTTVVSLA) threads the bilayer. Topologically, residues 173–210 (GDALGVVIQSLILKMTKRGVARTSEGRPSQPMALKKEL) are cytoplasmic.

It belongs to the WRB/GET1 family. As to quaternary structure, interacts with GET3.

Its subcellular location is the endoplasmic reticulum membrane. Its function is as follows. Required for the post-translational delivery of tail-anchored (TA) proteins to the endoplasmic reticulum. Acts as a membrane receptor for soluble GET3, which recognizes and selectively binds the transmembrane domain of TA proteins in the cytosol. This Uncinocarpus reesii (strain UAMH 1704) protein is Protein GET1.